A 714-amino-acid chain; its full sequence is Delta-like protein 1 (714 aa).

An N-terminal signal peptide occupies residues M1 to C17. Over Q18 to W537 the chain is Extracellular. Residues F176–C220 enclose the DSL domain. 27 disulfide bridges follow: C178-C187, C191-C203, C211-C220, C225-C236, C229-C242, C244-C253, C256-C267, C262-C273, C275-C284, C291-C303, C297-C313, C315-C324, C331-C342, C336-C351, C353-C362, C369-C380, C374-C390, C392-C401, C408-C419, C413-C428, C430-C439, C446-C457, C451-C466, C468-C477, C484-C495, C489-C504, and C506-C515. EGF-like domains follow at residues C225–C253, C256–C284, and C291–C324. An EGF-like 4; calcium-binding domain is found at C331 to C362. EGF-like domains are found at residues C369–C401 and C408–C439. Residues C446–C477 form the EGF-like 7; calcium-binding domain. N476 is a glycosylation site (N-linked (GlcNAc...) asparagine). The 32-residue stretch at C484 to C515 folds into the EGF-like 8 domain. The helical transmembrane segment at V538–C560 threads the bilayer. Residues V561–V714 are Cytoplasmic-facing. Residue K605 forms a Glycyl lysine isopeptide (Lys-Gly) (interchain with G-Cter in ubiquitin) linkage. Residue T630 is modified to Phosphothreonine. Residues A644 to K656 show a composition bias toward basic and acidic residues. The tract at residues A644–S690 is disordered. Residue S685 is modified to Phosphoserine; by PKB. S688 carries the post-translational modification Phosphoserine. An interaction with MAGI1 region spans residues A711–V714.

As to quaternary structure, homodimer. Interacts with TJP1. Interacts with MAGI1 (via PDZ domain); forms a complex with CTNNB1 and CDH2 and promotes recruitment to the adherens junction and stabilization on the cell surface. Interacts with PSEN1; undergoes a presenilin-dependent gamma-secretase cleavage that releases a Dll1-intracellular form. Interacts with MFAP5. Interacts with MIB1. Interacts with NEURL1B; leads to ubiquitination. Interacts with NEURL1. Interacts with SYNJ2BP; enhances DLL1 protein stability, and promotes Notch signaling in endothelial cells. Interacts with MAGI1, MAGI2, MAGI3 and MPDZ. Interacts (via ubiquitin) with EPN1 (via IUM domain); binding with NOTCH1 attached to neighboring cell, promotes ligand ubiquitination and EPN1 interaction, leading to NECD transendocytosis and Notch signaling. Interacts with NOTCH1. Post-translationally, ubiquitinated by MIB (MIB1 or MIB2), leading to its endocytosis and subsequent degradation. Ubiquitinated; promotes recycling back to the plasma membrane and confers a strong affinity for NOTCH1. Mono- and multi-ubiquitinated. Multi-ubiquitination of Lys-605 by MIB1 promotes both cis and trans-interaction with NOTCH1, as well as activation of Notch signaling. Ubiquitinated by NEURL1B. Phosphorylated in a membrane association-dependent manner. Phosphorylation at Ser-688 requires the presence of Ser-685, whereas phosphorylation at Thr-630 and Ser-685 occur independently of the other sites. Phosphorylation is required for full ligand activity in vitro and affects surface presentation, ectodomain shedding, and endocytosis. In terms of processing, O-fucosylated. Can be elongated to a disaccharide by MFNG.

The protein resides in the apical cell membrane. It localises to the cell junction. The protein localises to the adherens junction. Its subcellular location is the membrane raft. In terms of biological role, transmembrane ligand protein of NOTCH1, NOTCH2 and NOTCH3 receptors that binds the extracellular domain (ECD) of Notch receptor in a cis and trans fashion manner. Following transinteraction, ligand cells produce mechanical force that depends of a clathrin-mediated endocytosis, requiring ligand ubiquitination, EPN1 interaction, and actin polymerisation; these events promote Notch receptor extracellular domain (NECD) transendocytosis and triggers Notch signaling through induction of cleavage, hyperphosphorylation, and nuclear accumulation of the intracellular domain of Notch receptors (NICD). Is required for embryonic development and maintenance of adult stem cells in many different tissues and immune systeme; the DLL1-induced Notch signaling is mediated through an intercellular communication that regulates cell lineage, cell specification, cell patterning and morphogenesis through effects on differentiation and proliferation. Plays a role in brain development at different level, namely by regulating neuronal differentiation of neural precursor cells via cell-cell interaction, most likely through the lateral inhibitory system in an endogenous level dependent-manner. During neocortex development, Dll1-Notch signaling transmission is mediated by dynamic interactions between intermediate neurogenic progenitors and radial glia; the cell-cell interactions are mediated via dynamic and transient elongation processes, likely to reactivate/maintain Notch activity in neighboring progenitors, and coordinate progenitor cell division and differentiation across radial and zonal boundaries. During cerebellar development, regulates Bergmann glial monolayer formation and its morphological maturation through a Notch signaling pathway. At the retina and spinal cord level, regulates neurogenesis by preventing the premature differentiation of neural progenitors and also by maintaining progenitors in spinal cord through Notch signaling pathway. Also controls neurogenesis of the neural tube in a progenitor domain-specific fashion along the dorsoventral axis. Maintains quiescence of neural stem cells and plays a role as a fate determinant that segregates asymmetrically to one daughter cell during neural stem cells mitosis, resulting in neuronal differentiation in Dll1-inheriting cell. Plays a role in immune systeme development, namely the development of all T-cells and marginal zone (MZ) B cells. Blocks the differentiation of progenitor cells into the B-cell lineage while promoting the emergence of a population of cells with the characteristics of a T-cell/NK-cell precursor. Also plays a role during muscle development. During early development, inhibits myoblasts differentiation from the medial dermomyotomal lip and later regulates progenitor cell differentiation. Directly modulates cell adhesion and basal lamina formation in satellite cells through Notch signaling. Maintains myogenic progenitors pool by suppressing differentiation through down-regulation of MYOD1 and is required for satellite cell homing and PAX7 expression. During craniofacial and trunk myogenesis suppresses differentiation of cranial mesoderm-derived and somite-derived muscle via MYOD1 regulation but in cranial mesoderm-derived progenitors, is neither required for satellite cell homing nor for PAX7 expression. Also plays a role during pancreatic cell development. During type B pancreatic cell development, may be involved in the initiation of proximodistal patterning in the early pancreatic epithelium. Stimulates multipotent pancreatic progenitor cells proliferation and pancreatic growth by maintaining HES1 expression and PTF1A protein levels. During fetal stages of development, is required to maintain arterial identity and the responsiveness of arterial endothelial cells for VEGFA through regulation of KDR activation and NRP1 expression. Controls sprouting angiogenesis and subsequent vertical branch formation through regulation on tip cell differentiation. Negatively regulates goblet cell differentiation in intestine and controls secretory fat commitment through lateral inhibition in small intestine. Plays a role during inner ear development; negatively regulates auditory hair cell differentiation. Plays a role during nephron development through Notch signaling pathway. Regulates growth, blood pressure and energy homeostasis. The protein is Delta-like protein 1 (Dll1) of Rattus norvegicus (Rat).